The chain runs to 105 residues: Putative membrane protein insertion efficiency factor (105 aa).

Positions 68–105 are disordered; that stretch reads FHPGGLDPVPPRRNESGTEISDARPGSDGEASPGAPGL. Over residues 77 to 94 the composition is skewed to basic and acidic residues; sequence PPRRNESGTEISDARPGS.

The protein belongs to the UPF0161 family.

The protein localises to the cell membrane. Functionally, could be involved in insertion of integral membrane proteins into the membrane. The sequence is that of Putative membrane protein insertion efficiency factor from Thermobifida fusca (strain YX).